The sequence spans 329 residues: Deoxynucleotidyltransferase terminal-interacting protein 1 (329 aa).

The tract at residues 1–27 is disordered; it reads MGATGDVEQPRGPGGAERGGPELGDAG. The span at 12-22 shows a compositional bias: gly residues; sequence GPGGAERGGPE. The segment at 56 to 147 is important for dimerization; that stretch reads MTTSFTDPAI…RLTHELPGIK (92 aa). Residues 159-173 constitute a DNA-binding region (a.T hook); sequence RGSPIPKKRKGRPPG. Position 161 is a phosphoserine (Ser-161). A Nuclear localization signal motif is present at residues 164–170; it reads PKKRKGR. Positions 197-316 are important for DNA and nucleosome binding; sequence REGPKWDPAR…MRKYMETLRT (120 aa). The segment at residues 216 to 237 is a DNA-binding region (H-T-H motif); the sequence is GSRANKALGMGGTRGRIYIKHP.

Monomer and homodimer. A minor proportion may form homotrimers. Interacts with ZNF541. Interacts with the terminal deoxynucleotidyltransferase DNTT. Interacts with TRERF1. Identified in a histone deacetylase complex that contains DNTTIP1, HDAC1 and MIDEAS; this complex assembles into a tetramer that contains four copies of each protein chain. Component of a histone deacetylase complex containing DNTTIP1, ZNF541, HDAC1 and HDAC2. Identified in a complex with KCTD19, HDAC1, HDAC2 and ZNF541.

It is found in the nucleus. In terms of biological role, increases DNTT terminal deoxynucleotidyltransferase activity (in vitro). Also acts as a transcriptional regulator, binding to the consensus sequence 5'-GNTGCATG-3' following an AT-tract. Associates with RAB20 promoter and positively regulates its transcription. Binds DNA and nucleosomes; may recruit HDAC1 complexes to nucleosomes or naked DNA. The protein is Deoxynucleotidyltransferase terminal-interacting protein 1 (DNTTIP1) of Bos taurus (Bovine).